The sequence spans 165 residues: Regulator of ribonuclease activity A (165 aa).

Belongs to the RraA family. In terms of assembly, homotrimer. Binds to both RNA-binding sites in the C-terminal region of Rne and to RhlB.

It is found in the cytoplasm. Functionally, globally modulates RNA abundance by binding to RNase E (Rne) and regulating its endonucleolytic activity. Can modulate Rne action in a substrate-dependent manner by altering the composition of the degradosome. Modulates RNA-binding and helicase activities of the degradosome. The protein is Regulator of ribonuclease activity A of Actinobacillus pleuropneumoniae serotype 5b (strain L20).